A 208-amino-acid polypeptide reads, in one-letter code: Rac-like GTP-binding protein ARAC8 (208 aa).

15-22 (GDGAVGKT) contributes to the GTP binding site. Residues 37–45 (YIPTVFDNF) carry the Effector region motif. GTP is bound by residues 62–66 (DTAGQ) and 120–123 (TKMD). 2 S-palmitoyl cysteine lipidation sites follow: C199 and C205.

This sequence belongs to the small GTPase superfamily. Rho family. As to quaternary structure, interacts with ICR1. Binds to SPK1. Post-translationally, although this sequence has a C-terminal -CXXX, it is palmitoylated at Cys-205, rather than prenylated.

It localises to the membrane. Acts as a negative regulator of abscisic acid (ABA) responses. This Arabidopsis thaliana (Mouse-ear cress) protein is Rac-like GTP-binding protein ARAC8 (ARAC8).